The sequence spans 365 residues: RISC-loading complex subunit TARBP2 (365 aa).

Sufficient for interaction with PRKRA stretches follow at residues 22 to 105, 151 to 233, and 286 to 365; these read MLAA…EPAL, SPQQ…DARD, and LGAL…AGSK. The DRBM 1 domain maps to 30-97; it reads TPISLLQEYG…AEVALKHLKG (68 aa). At Ser151 the chain carries Phosphoserine. DRBM domains lie at 158 to 226 and 292 to 360; these read NPVG…RVHT and ACCS…YLRI. The segment at 227–365 is sufficient for interaction with DICER1; the sequence is VPLDARDGNE…QYLRIMAGSK (139 aa).

Belongs to the TARBP2 family. Self-associates. Component of the RISC loading complex (RLC), or micro-RNA (miRNA) loading complex (miRLC), which is composed of DICER1, AGO2 and TARBP2. Note that the trimeric RLC/miRLC is also referred to as RISC. Interacts with EIF2AK2/PKR and inhibits its protein kinase activity. Interacts with DHX9. Interacts with DICER1 and PRKRA. Interacts with DICER1, AGO2, MOV10, EIF6 and RPL7A (60S ribosome subunit); they form a large RNA-induced silencing complex (RISC). Interacts with IRF7; this interaction prevents IRF7 phosphorylation and activation.

It is found in the cytoplasm. It localises to the perinuclear region. The protein localises to the nucleus. In terms of biological role, required for formation of the RNA induced silencing complex (RISC). Component of the RISC loading complex (RLC), also known as the micro-RNA (miRNA) loading complex (miRLC), which is composed of DICER1, AGO2 and TARBP2. Within the RLC/miRLC, DICER1 and TARBP2 are required to process precursor miRNAs (pre-miRNAs) to mature miRNAs and then load them onto AGO2. AGO2 bound to the mature miRNA constitutes the minimal RISC and may subsequently dissociate from DICER1 and TARBP2. May also play a role in the production of short interfering RNAs (siRNAs) from double-stranded RNA (dsRNA) by DICER1. Binds in vitro to the PRM1 3'-UTR. Seems to act as a repressor of translation. For some pre-miRNA substrates, may also alter the choice of cleavage site by DICER1. Negatively regulates IRF7-mediated IFN-beta signaling triggered by viral infection by inhibiting the phosphorylation of IRF7 and promoting its 'Lys'-48-linked ubiquitination and degradation. This chain is RISC-loading complex subunit TARBP2 (Tarbp2), found in Mus musculus (Mouse).